A 334-amino-acid chain; its full sequence is Amino acid--[acyl-carrier-protein] ligase 2 (334 aa).

Position 131 (C131) interacts with Zn(2+). Residues R159, E161, and 168–169 (RL) contribute to the ATP site. Residue E176 participates in Zn(2+) binding. Residue E176 participates in an L-alpha-amino acid binding. ATP contacts are provided by residues K235 and 250-253 (ACMS). C279 provides a ligand contact to Zn(2+). ATP is bound at residue R286.

It belongs to the class-II aminoacyl-tRNA synthetase family. Amino acid--[acyl-carrier-protein] ligase subfamily. In terms of assembly, homodimer. Zn(2+) serves as cofactor.

It carries out the reaction an L-alpha-amino acid + holo-[ACP] + ATP = an L-alpha-aminoacyl-[ACP] + AMP + diphosphate. Its function is as follows. Catalyzes the ATP-dependent activation of L-glycine and its transfer to the phosphopantetheine prosthetic group covalently attached to the vicinal carrier protein blr6284 of yet unknown function. May participate in nonribosomal peptide synthesis or related processes. L-alanine is a poor substrate whereas L-serine or D-amino acids are not substrates for ATP-dependent activation. Does not display tRNA aminoacylation activity. This is Amino acid--[acyl-carrier-protein] ligase 2 from Bradyrhizobium diazoefficiens (strain JCM 10833 / BCRC 13528 / IAM 13628 / NBRC 14792 / USDA 110).